The chain runs to 416 residues: Pectin acetylesterase 3 (416 aa).

The signal sequence occupies residues 1-25 (MKSVLRIAAAIFWLWLFIVLGVIGS). Asn131 carries an N-linked (GlcNAc...) asparagine glycan. Catalysis depends on charge relay system residues Ser198 and Asp294. Residue Asn324 is glycosylated (N-linked (GlcNAc...) asparagine). The active-site Charge relay system is His361.

The protein belongs to the pectinacetylesterase family.

Its subcellular location is the secreted. It is found in the cell wall. Its function is as follows. Hydrolyzes acetyl esters in homogalacturonan regions of pectin. In type I primary cell wall, galacturonic acid residues of pectin can be acetylated at the O-2 and O-3 positions. Decreasing the degree of acetylation of pectin gels in vitro alters their physical properties. This is Pectin acetylesterase 3 from Arabidopsis thaliana (Mouse-ear cress).